The following is a 452-amino-acid chain: mRNA export factor ICP27 homolog (452 aa).

Residues 42-164 (EAIGSTPGED…RNDQTHDESY (123 aa)) are disordered. Positions 98 to 107 (SNHHGGRDVE) are enriched in basic and acidic residues. Basic residues predominate over residues 129 to 144 (SRKHRDRSLSNRRRRP). Residues 154 to 164 (ERNDQTHDESY) show a composition bias toward basic and acidic residues. Cys335, His417, Cys421, and Cys426 together coordinate Zn(2+). The CHC2-type zinc-finger motif lies at 335-426 (CLLLNRDNDL…HQRECGRVEC (92 aa)).

The protein belongs to the HHV-1 ICP27 protein family. As to quaternary structure, homodimer. Homodimerization is required for transactivation. Associates in a complex with RNA, and host export factors NXF1/TAP and ALYREF; these interactions allow nuclear export of viral transcripts. Interacts with three host shuttling SR proteins SRSF1, SRSF3 and SRSF7. Interacts with host SRPK1. Interacts with IE62; this interaction enhances IE62 transactivation. In terms of processing, phosphorylated in vitro by SRPK1.

The protein resides in the host cytoplasm. It localises to the host nucleus. In terms of biological role, multifunctional regulator of the expression of viral genes that mediates nuclear export of viral intronless mRNAs. This immediate early (EI) protein promotes the nuclear export of viral intronless mRNAs by interacting with mRNAs and host NXF1/TAP. This Varicella-zoster virus (strain Dumas) (HHV-3) protein is mRNA export factor ICP27 homolog.